Here is a 475-residue protein sequence, read N- to C-terminus: Bifunctional protein HldE (475 aa).

The ribokinase stretch occupies residues 1 to 320 (MNSSYLNFKD…AIMFQRSHNT (320 aa)). Position 196–199 (196–199 (NLLE)) interacts with ATP. D265 is an active-site residue. A cytidylyltransferase region spans residues 346–475 (FTNGCFDILH…TTSIIEKANL (130 aa)).

The protein in the N-terminal section; belongs to the carbohydrate kinase PfkB family. In the C-terminal section; belongs to the cytidylyltransferase family. Homodimer.

It carries out the reaction D-glycero-beta-D-manno-heptose 7-phosphate + ATP = D-glycero-beta-D-manno-heptose 1,7-bisphosphate + ADP + H(+). It catalyses the reaction D-glycero-beta-D-manno-heptose 1-phosphate + ATP + H(+) = ADP-D-glycero-beta-D-manno-heptose + diphosphate. It functions in the pathway nucleotide-sugar biosynthesis; ADP-L-glycero-beta-D-manno-heptose biosynthesis; ADP-L-glycero-beta-D-manno-heptose from D-glycero-beta-D-manno-heptose 7-phosphate: step 1/4. It participates in nucleotide-sugar biosynthesis; ADP-L-glycero-beta-D-manno-heptose biosynthesis; ADP-L-glycero-beta-D-manno-heptose from D-glycero-beta-D-manno-heptose 7-phosphate: step 3/4. Functionally, catalyzes the phosphorylation of D-glycero-D-manno-heptose 7-phosphate at the C-1 position to selectively form D-glycero-beta-D-manno-heptose-1,7-bisphosphate. In terms of biological role, catalyzes the ADP transfer from ATP to D-glycero-beta-D-manno-heptose 1-phosphate, yielding ADP-D-glycero-beta-D-manno-heptose. The chain is Bifunctional protein HldE from Marinomonas sp. (strain MWYL1).